A 365-amino-acid polypeptide reads, in one-letter code: tRNA (guanine(6)-N2)-methyltransferase (365 aa).

The region spanning 69–182 (NENSRLLHRV…KDVFFLGIDT (114 aa)) is the THUMP domain. Residues 198–202 (HPAHL), 228–230 (SGT), Glu-248, 276–277 (DA), and Asn-293 each bind S-adenosyl-L-methionine.

Belongs to the methyltransferase superfamily. In terms of assembly, monomer in solution.

It is found in the cytoplasm. The enzyme catalyses guanosine(6) in tRNA + S-adenosyl-L-methionine = N(2)-methylguanosine(6) in tRNA + S-adenosyl-L-homocysteine + H(+). Its function is as follows. S-adenosyl-L-methionine-dependent methyltransferase that catalyzes the methylation of the guanosine nucleotide at position 6 (m2G6) in tRNA(Phe). The sequence is that of tRNA (guanine(6)-N2)-methyltransferase from Pyrococcus furiosus (strain ATCC 43587 / DSM 3638 / JCM 8422 / Vc1).